Reading from the N-terminus, the 440-residue chain is Glutamyl-tRNA reductase (440 aa).

Residues Thr-40–Arg-43, Ser-100, Glu-105–Glu-107, and Gln-111 each bind substrate. Cys-41 (nucleophile) is an active-site residue. Gly-181 to Ala-186 is a binding site for NADP(+).

It belongs to the glutamyl-tRNA reductase family. Homodimer.

The enzyme catalyses (S)-4-amino-5-oxopentanoate + tRNA(Glu) + NADP(+) = L-glutamyl-tRNA(Glu) + NADPH + H(+). It participates in porphyrin-containing compound metabolism; protoporphyrin-IX biosynthesis; 5-aminolevulinate from L-glutamyl-tRNA(Glu): step 1/2. In terms of biological role, catalyzes the NADPH-dependent reduction of glutamyl-tRNA(Glu) to glutamate 1-semialdehyde (GSA). This is Glutamyl-tRNA reductase from Renibacterium salmoninarum (strain ATCC 33209 / DSM 20767 / JCM 11484 / NBRC 15589 / NCIMB 2235).